The primary structure comprises 195 residues: Imidazoleglycerol-phosphate dehydratase (195 aa).

Belongs to the imidazoleglycerol-phosphate dehydratase family.

The protein localises to the cytoplasm. The catalysed reaction is D-erythro-1-(imidazol-4-yl)glycerol 3-phosphate = 3-(imidazol-4-yl)-2-oxopropyl phosphate + H2O. Its pathway is amino-acid biosynthesis; L-histidine biosynthesis; L-histidine from 5-phospho-alpha-D-ribose 1-diphosphate: step 6/9. The protein is Imidazoleglycerol-phosphate dehydratase of Dinoroseobacter shibae (strain DSM 16493 / NCIMB 14021 / DFL 12).